A 402-amino-acid polypeptide reads, in one-letter code: Zinc finger CCCH domain-containing protein 35 (402 aa).

2 C3H1-type zinc fingers span residues 117–144 and 152–176; these read CYSGTACPDFRKGGCKRGDACEFAHGVF and RYRTQPCKDGTACRRRVCFFAHTPD. Disordered stretches follow at residues 180–211 and 232–258; these read VLPPSQQQGSNSPRGCGGGGAGAAASPLAESY and SSPTSTLVSPPRSPPSESPPLSPDAAG. Over residues 183 to 192 the composition is skewed to polar residues; that stretch reads PSQQQGSNSP. Low complexity predominate over residues 232-241; the sequence is SSPTSTLVSP. The span at 242-253 shows a compositional bias: pro residues; that stretch reads PRSPPSESPPLS.

This Oryza sativa subsp. japonica (Rice) protein is Zinc finger CCCH domain-containing protein 35.